A 941-amino-acid polypeptide reads, in one-letter code: Isoleucine--tRNA ligase (941 aa).

A 'HIGH' region motif is present at residues 59–69 (PYANGNIHIGH). Residue glutamate 562 coordinates L-isoleucyl-5'-AMP. The 'KMSKS' region motif lies at 603-607 (KMSKS). Lysine 606 lines the ATP pocket. Cysteine 904, cysteine 907, cysteine 924, and cysteine 927 together coordinate Zn(2+).

Belongs to the class-I aminoacyl-tRNA synthetase family. IleS type 1 subfamily. As to quaternary structure, monomer. Zn(2+) serves as cofactor.

It is found in the cytoplasm. It carries out the reaction tRNA(Ile) + L-isoleucine + ATP = L-isoleucyl-tRNA(Ile) + AMP + diphosphate. Its function is as follows. Catalyzes the attachment of isoleucine to tRNA(Ile). As IleRS can inadvertently accommodate and process structurally similar amino acids such as valine, to avoid such errors it has two additional distinct tRNA(Ile)-dependent editing activities. One activity is designated as 'pretransfer' editing and involves the hydrolysis of activated Val-AMP. The other activity is designated 'posttransfer' editing and involves deacylation of mischarged Val-tRNA(Ile). In Haemophilus influenzae (strain PittGG), this protein is Isoleucine--tRNA ligase.